The following is a 102-amino-acid chain: Cytochrome c-553 (102 aa).

Residues methionine 1 to alanine 23 form the signal peptide. Positions 33, 36, 37, and 80 each coordinate heme c.

Binds 1 heme c group covalently per subunit.

Its subcellular location is the periplasm. Functionally, natural electron acceptor for a formate dehydrogenase. The polypeptide is Cytochrome c-553 (Nitratidesulfovibrio vulgaris (strain DSM 19637 / Miyazaki F) (Desulfovibrio vulgaris)).